The chain runs to 165 residues: MSQATKRKHVVKEVLGEHIVPSDQQQIVRVLRTPGNNLHEVETAQGQRFLVSMPSKYRKNIWIKRGDFLIVDPIEEGEKVKAEISFVLCKDHVRSLQKEGFWPEAFSEVAEKHNNRNRQTQPELPAEPQLSGEESSSEDDSDLFVNTNRRQYHESEEESEEEEAA.

The 85-residue stretch at 5–89 (TKRKHVVKEV…VKAEISFVLC (85 aa)) folds into the S1-like domain. The Nuclear localization signal motif lies at 6-12 (KRKHVVK). Threonine 33 carries the phosphothreonine modification. Positions 56-65 (KYRKNIWIKR) match the Nuclear localization signal motif. A disordered region spans residues 112–165 (KHNNRNRQTQPELPAEPQLSGEESSSEDDSDLFVNTNRRQYHESEEESEEEEAA). Phosphoserine occurs at positions 131, 135, 136, 137, 155, and 159. Residues 155-165 (SEEESEEEEAA) are compositionally biased toward acidic residues.

Belongs to the EIF1AD family. Interacts with GAPDH and STAT1.

It is found in the nucleus. Its function is as follows. Plays a role into cellular response to oxidative stress. Decreases cell proliferation. This Macaca fascicularis (Crab-eating macaque) protein is Probable RNA-binding protein EIF1AD (EIF1AD).